The following is a 647-amino-acid chain: DNA mismatch repair protein MutL (647 aa).

This sequence belongs to the DNA mismatch repair MutL/HexB family.

This protein is involved in the repair of mismatches in DNA. It is required for dam-dependent methyl-directed DNA mismatch repair. May act as a 'molecular matchmaker', a protein that promotes the formation of a stable complex between two or more DNA-binding proteins in an ATP-dependent manner without itself being part of a final effector complex. The protein is DNA mismatch repair protein MutL of Bacillus cereus (strain 03BB102).